We begin with the raw amino-acid sequence, 187 residues long: Elongation factor P (187 aa).

This sequence belongs to the elongation factor P family.

It localises to the cytoplasm. It functions in the pathway protein biosynthesis; polypeptide chain elongation. Functionally, involved in peptide bond synthesis. Stimulates efficient translation and peptide-bond synthesis on native or reconstituted 70S ribosomes in vitro. Probably functions indirectly by altering the affinity of the ribosome for aminoacyl-tRNA, thus increasing their reactivity as acceptors for peptidyl transferase. This Corynebacterium urealyticum (strain ATCC 43042 / DSM 7109) protein is Elongation factor P.